Consider the following 171-residue polypeptide: Transcription factor E (171 aa).

Residues 1–81 (MLNLAKELVG…YWKVNVNQIN (81 aa)) enclose the HTH TFE/IIEalpha-type domain.

The protein belongs to the TFE family. As to quaternary structure, monomer. Interaction with RNA polymerase subunits RpoF and RpoE is necessary for Tfe stimulatory transcription activity. Able to interact with Tbp and RNA polymerase in the absence of DNA promoter. Interacts both with the preinitiation and elongation complexes.

Transcription factor that plays a role in the activation of archaeal genes transcribed by RNA polymerase. Facilitates transcription initiation by enhancing TATA-box recognition by TATA-box-binding protein (Tbp), and transcription factor B (Tfb) and RNA polymerase recruitment. Not absolutely required for transcription in vitro, but particularly important in cases where Tbp or Tfb function is not optimal. It dynamically alters the nucleic acid-binding properties of RNA polymerases by stabilizing the initiation complex and destabilizing elongation complexes. Seems to translocate with the RNA polymerase following initiation and acts by binding to the non template strand of the transcription bubble in elongation complexes. The chain is Transcription factor E from Sulfolobus acidocaldarius (strain ATCC 33909 / DSM 639 / JCM 8929 / NBRC 15157 / NCIMB 11770).